The chain runs to 274 residues: Hydroxyethylthiazole kinase (274 aa).

Methionine 51 contributes to the substrate binding site. Residues arginine 127 and serine 173 each contribute to the ATP site. Glycine 200 lines the substrate pocket.

Belongs to the Thz kinase family. It depends on Mg(2+) as a cofactor.

It catalyses the reaction 5-(2-hydroxyethyl)-4-methylthiazole + ATP = 4-methyl-5-(2-phosphooxyethyl)-thiazole + ADP + H(+). It functions in the pathway cofactor biosynthesis; thiamine diphosphate biosynthesis; 4-methyl-5-(2-phosphoethyl)-thiazole from 5-(2-hydroxyethyl)-4-methylthiazole: step 1/1. In terms of biological role, catalyzes the phosphorylation of the hydroxyl group of 4-methyl-5-beta-hydroxyethylthiazole (THZ). This Photobacterium profundum (strain SS9) protein is Hydroxyethylthiazole kinase.